The following is a 380-amino-acid chain: Acyl-coenzyme A diphosphatase NUDT19 (380 aa).

The 257-residue stretch at 8–264 (WKEAATLIVA…KIWIPPPQFY (257 aa)) folds into the Nudix hydrolase domain. The Nudix box signature appears at 115 to 136 (SLIPGEVATRICAIRETFEESG). Residues E130 and E134 each contribute to the Mg(2+) site. The Microbody targeting signal motif lies at 378-380 (NKL).

It belongs to the Nudix hydrolase family. Monomer. Mg(2+) serves as cofactor. The cofactor is Mn(2+).

The protein localises to the peroxisome. The enzyme catalyses an acyl-CoA + H2O = an acyl-4'-phosphopantetheine + adenosine 3',5'-bisphosphate + 2 H(+). It carries out the reaction CoA + H2O = (R)-4'-phosphopantetheine + adenosine 3',5'-bisphosphate + 2 H(+). It catalyses the reaction hexanoyl-CoA + H2O = hexanoyl-4'-phosphopantetheine + adenosine 3',5'-bisphosphate + 2 H(+). The catalysed reaction is octanoyl-CoA + H2O = S-octanoyl-4'-phosphopantetheine + adenosine 3',5'-bisphosphate + 2 H(+). The enzyme catalyses butanoyl-CoA + H2O = S-butanoyl-4'-phosphopantetheine + adenosine 3',5'-bisphosphate + 2 H(+). It carries out the reaction propanoyl-CoA + H2O = propanoyl-4'-phosphopantetheine + adenosine 3',5'-bisphosphate + 2 H(+). It catalyses the reaction malonyl-CoA + H2O = malonyl-4'-phosphopantetheine + adenosine 3',5'-bisphosphate + 2 H(+). The catalysed reaction is succinyl-CoA + H2O = succinyl-4'-phosphopantetheine + adenosine 3',5'-bisphosphate + 2 H(+). The enzyme catalyses choloyl-CoA + H2O = S-choloyl-4'-phosphopantetheine + adenosine 3',5'-bisphosphate + 2 H(+). It carries out the reaction 4,8-dimethylnonanoyl-CoA + H2O = S-(4,8-dimethylnonanoyl)-4'-phosphopantetheine + adenosine 3',5'-bisphosphate + 2 H(+). It catalyses the reaction (9Z,12Z,15Z)-octadecatrienoyl-CoA + H2O = S-(9Z,12Z,15Z-octadecatrienoyl)-4'-phosphopantetheine + adenosine 3',5'-bisphosphate + 2 H(+). The catalysed reaction is (9Z,12Z)-octadecadienoyl-CoA + H2O = S-(9Z,12Z-octadecadienoyl)-4'-phosphopantetheine + adenosine 3',5'-bisphosphate + 2 H(+). The enzyme catalyses (9Z)-hexadecenoyl-CoA + H2O = S-(9Z-hexadecenoyl)-4'-phosphopantetheine + adenosine 3',5'-bisphosphate + 2 H(+). It carries out the reaction (9Z)-tetradecenoyl-CoA + H2O = S-(9Z-tetradecenoyl)-4'-phosphopantetheine + adenosine 3',5'-bisphosphate + 2 H(+). It catalyses the reaction (6Z)-octenoyl-CoA + H2O = S-(6Z-octenoyl)-4'-phosphopantetheine + adenosine 3',5'-bisphosphate + 2 H(+). The catalysed reaction is hexadecanoyl-CoA + H2O = S-hexadecanoyl-4'-phosphopantetheine + adenosine 3',5'-bisphosphate + 2 H(+). The enzyme catalyses tetradecanoyl-CoA + H2O = tetradecanoyl-4'-phosphopantetheine + adenosine 3',5'-bisphosphate + 2 H(+). It carries out the reaction dodecanoyl-CoA + H2O = S-dodecanoyl-4'-phosphopantetheine + adenosine 3',5'-bisphosphate + 2 H(+). It catalyses the reaction a 5'-end CoA-ribonucleoside in mRNA + H2O = a 5'-end phospho-adenosine-phospho-ribonucleoside in mRNA + (R)-4'-phosphopantetheine + 2 H(+). Functionally, fatty acyl-coenzyme A (CoA) diphosphatase that hydrolyzes fatty acyl-CoA to yield acyl-4'-phosphopantetheine and adenosine 3',5'-bisphosphate. Mediates the hydrolysis of a wide range of CoA esters, including choloyl-CoA and branched-chain fatty-acyl-CoA esters and at low substrate concentrations medium and long-chain fatty-acyl-CoA esters are the primary substrates. Highest activity seen with medium-chain acyl-CoA esters and higher rates of activity seen with the unsaturated acyl-CoA esters compared with the saturated esters. Exhibits decapping activity towards dpCoA-capped RNAs in vitro. In Xenopus laevis (African clawed frog), this protein is Acyl-coenzyme A diphosphatase NUDT19 (nudt19).